Reading from the N-terminus, the 157-residue chain is MSGFLEGSRCSECMDWGEKRNTIASIAAGVLFFTGWWIIIDAAVMYPRMDQFNHSYHTCGVIATIAFLMINAVSNGQVRGDSYSEGCLGQTGARIWLFIGFMLAFGSLIASMWILFGGYVAKEKDVVYPGIAVFFQNAFIFFGGLVFKFGRTEDLWQ.

S2 is subject to N-acetylserine. Residue S2 is modified to Phosphoserine. Helical transmembrane passes span 26-46 (IAAG…AVMY), 58-78 (TCGV…NGQV), 95-115 (IWLF…MWIL), and 126-146 (VVYP…GGLV).

It belongs to the UPF0220 family.

The protein localises to the membrane. In Mus musculus (Mouse), this protein is Transmembrane protein 50A (Tmem50a).